The primary structure comprises 169 residues: Nicotinamide-nucleotide adenylyltransferase (169 aa).

Belongs to the archaeal NMN adenylyltransferase family.

It localises to the cytoplasm. It carries out the reaction beta-nicotinamide D-ribonucleotide + ATP + H(+) = diphosphate + NAD(+). It functions in the pathway cofactor biosynthesis; NAD(+) biosynthesis; NAD(+) from nicotinamide D-ribonucleotide: step 1/1. The sequence is that of Nicotinamide-nucleotide adenylyltransferase from Picrophilus torridus (strain ATCC 700027 / DSM 9790 / JCM 10055 / NBRC 100828 / KAW 2/3).